A 264-amino-acid polypeptide reads, in one-letter code: Thiazole synthase (264 aa).

Lysine 106 functions as the Schiff-base intermediate with DXP in the catalytic mechanism. 1-deoxy-D-xylulose 5-phosphate contacts are provided by residues glycine 167, 193 to 194 (AG), and 215 to 216 (NS).

It belongs to the ThiG family. In terms of assembly, homotetramer. Forms heterodimers with either ThiH or ThiS.

It is found in the cytoplasm. It catalyses the reaction [ThiS sulfur-carrier protein]-C-terminal-Gly-aminoethanethioate + 2-iminoacetate + 1-deoxy-D-xylulose 5-phosphate = [ThiS sulfur-carrier protein]-C-terminal Gly-Gly + 2-[(2R,5Z)-2-carboxy-4-methylthiazol-5(2H)-ylidene]ethyl phosphate + 2 H2O + H(+). It functions in the pathway cofactor biosynthesis; thiamine diphosphate biosynthesis. In terms of biological role, catalyzes the rearrangement of 1-deoxy-D-xylulose 5-phosphate (DXP) to produce the thiazole phosphate moiety of thiamine. Sulfur is provided by the thiocarboxylate moiety of the carrier protein ThiS. In vitro, sulfur can be provided by H(2)S. In Pseudomonas putida (strain W619), this protein is Thiazole synthase.